The primary structure comprises 424 residues: Na(+)/H(+) antiporter NhaA (424 aa).

The next 11 membrane-spanning stretches (helical) occupy residues 23-43 (ILLI…LATL), 65-85 (VHLW…GLEI), 102-122 (LPFI…MFFV), 131-151 (GWAI…ALLG), 160-180 (LFLV…IALF), 183-203 (AKIN…MFAC), 211-231 (LLVY…SGVH), 265-285 (ALHP…NAGV), 303-323 (IAAG…WLAV), 341-361 (AVSM…SLAF), and 373-393 (IGIL…LRLA).

It belongs to the NhaA Na(+)/H(+) (TC 2.A.33) antiporter family.

It localises to the cell inner membrane. It catalyses the reaction Na(+)(in) + 2 H(+)(out) = Na(+)(out) + 2 H(+)(in). Na(+)/H(+) antiporter that extrudes sodium in exchange for external protons. This chain is Na(+)/H(+) antiporter NhaA, found in Sphingopyxis alaskensis (strain DSM 13593 / LMG 18877 / RB2256) (Sphingomonas alaskensis).